A 274-amino-acid chain; its full sequence is Energy-coupling factor transporter ATP-binding protein EcfA1 (274 aa).

Positions 10 to 241 constitute an ABC transporter domain; it reads ASFQGVYFSY…AAELQKIRLD (232 aa). 42-49 is an ATP binding site; sequence GHNGSGKS.

Belongs to the ABC transporter superfamily. Energy-coupling factor EcfA family. In terms of assembly, forms a stable energy-coupling factor (ECF) transporter complex composed of 2 membrane-embedded substrate-binding proteins (S component), 2 ATP-binding proteins (A component) and 2 transmembrane proteins (T component).

It is found in the cell membrane. In terms of biological role, ATP-binding (A) component of a common energy-coupling factor (ECF) ABC-transporter complex. Unlike classic ABC transporters this ECF transporter provides the energy necessary to transport a number of different substrates. In Mycoplasma pneumoniae (strain ATCC 29342 / M129 / Subtype 1) (Mycoplasmoides pneumoniae), this protein is Energy-coupling factor transporter ATP-binding protein EcfA1.